A 286-amino-acid polypeptide reads, in one-letter code: Penicillin-insensitive murein endopeptidase (286 aa).

The first 22 residues, 1 to 22 (MNKILLKTTIIFTALFSLNVVA), serve as a signal peptide directing secretion. Zn(2+) is bound by residues histidine 117, histidine 120, aspartate 127, aspartate 152, and histidine 218.

Belongs to the peptidase M74 family. Zn(2+) is required as a cofactor.

Its subcellular location is the periplasm. Functionally, murein endopeptidase that cleaves the D-alanyl-meso-2,6-diamino-pimelyl amide bond that connects peptidoglycan strands. Likely plays a role in the removal of murein from the sacculus. The sequence is that of Penicillin-insensitive murein endopeptidase (mepA) from Haemophilus influenzae (strain ATCC 51907 / DSM 11121 / KW20 / Rd).